Reading from the N-terminus, the 493-residue chain is Serine/threonine-protein kinase chk-1 (493 aa).

Positions 26 to 286 constitute a Protein kinase domain; that stretch reads YRVIRTLGEG…IEQIKTDPWF (261 aa). ATP contacts are provided by residues 32-40 and K56; that span reads LGEGAFGEV. D150 acts as the Proton acceptor in catalysis. The segment at 308-348 is disordered; that stretch reads DENSPDCNISSTQQADAVSTAKRRHLETPDKVAHVERQNAS. The span at 312–324 shows a compositional bias: polar residues; that stretch reads PDCNISSTQQADA. Over residues 333–344 the composition is skewed to basic and acidic residues; it reads LETPDKVAHVER.

Belongs to the protein kinase superfamily. CAMK Ser/Thr protein kinase family. NIM1 subfamily.

It is found in the cytoplasm. Its subcellular location is the nucleus. It carries out the reaction L-seryl-[protein] + ATP = O-phospho-L-seryl-[protein] + ADP + H(+). It catalyses the reaction L-threonyl-[protein] + ATP = O-phospho-L-threonyl-[protein] + ADP + H(+). Its function is as follows. Serine/threonine-protein kinase which is required for checkpoint-mediated cell cycle arrest and activation of DNA repair in response to the presence of DNA damage or unreplicated DNA. May also negatively regulate cell cycle progression during unperturbed cell cycles. Required for checkpoint mediated cell cycle arrest in response to DNA damage in germline cells. Essential for embryogenesis. The polypeptide is Serine/threonine-protein kinase chk-1 (chk-1) (Caenorhabditis briggsae).